Here is a 592-residue protein sequence, read N- to C-terminus: MRVLCAFPEAMASSSSRPPSCLALVALFLALLLHLSLSFHAGNRRPLPVDRATGLKEKTLILLDVSTKNPVRTVNENFLSLQLDPSIIHDGWLDFLSSKRLVTLARGLSPAFLRFGGKRTDFLQFQNLRNPAKSRGGPGPDYYLKNYEDDIVRSDVALDKQKGCKIAQHPDVMLELQREKASQMHLVLLKEQYSNTYSNLILTARSLDKLYNFADCSGLHLIFALNALRRNPNNSWNSSSALSLLKYSASKKYNISWELGNEPNNYRSIHGRAVNGSQLGKDYIQLKSLLQPIRVYSRASLYGPNIGRPRKNVIALLDGFMKVAGSTVDAVTWQHCYIDGRVVKVMDFLKTRLLDTLSDQIRKIQKVVNTYTPGKKIWLEGVVTTSAGGTNNLSDSYAAGFLWLNTLGMLANQGIDVVIRHSFFDHGYNHLVDQNFNPLPDYWLSLLYKRLIGPKVLAVHVAGLQRKPRPGRVIRDKLRIYAHCTNHHNHNYVRGSITLFIINLHRSRKKIKLAGTLRDKLVHQYLLQPYGQEGLKSKSVQLNGQPLVMVDDGTLPELKPRPLRAGRTLVIPPVTMGFYVVKNVNALACRYR.

An N-terminal signal peptide occupies residues 1–38 (MRVLCAFPEAMASSSSRPPSCLALVALFLALLLHLSLS). N-linked (GlcNAc...) asparagine glycans are attached at residues Asn-254 and Asn-392.

Belongs to the glycosyl hydrolase 79 family. Interacts with HPSE. Interacts with SDC1 (via glycan chains).

The protein resides in the secreted. Its subcellular location is the extracellular space. The protein localises to the extracellular matrix. Its function is as follows. Binds heparin and heparan sulfate with high affinity, but lacks heparanase activity. Inhibits HPSE, possibly by competing for its substrates (in vitro). This is Inactive heparanase-2 (Hpse2) from Mus musculus (Mouse).